The sequence spans 565 residues: Proline--tRNA ligase (565 aa).

Belongs to the class-II aminoacyl-tRNA synthetase family. ProS type 1 subfamily. As to quaternary structure, homodimer.

The protein resides in the cytoplasm. It carries out the reaction tRNA(Pro) + L-proline + ATP = L-prolyl-tRNA(Pro) + AMP + diphosphate. In terms of biological role, catalyzes the attachment of proline to tRNA(Pro) in a two-step reaction: proline is first activated by ATP to form Pro-AMP and then transferred to the acceptor end of tRNA(Pro). As ProRS can inadvertently accommodate and process non-cognate amino acids such as alanine and cysteine, to avoid such errors it has two additional distinct editing activities against alanine. One activity is designated as 'pretransfer' editing and involves the tRNA(Pro)-independent hydrolysis of activated Ala-AMP. The other activity is designated 'posttransfer' editing and involves deacylation of mischarged Ala-tRNA(Pro). The misacylated Cys-tRNA(Pro) is not edited by ProRS. The sequence is that of Proline--tRNA ligase from Campylobacter lari (strain RM2100 / D67 / ATCC BAA-1060).